The following is a 357-amino-acid chain: Meiotic driver wtf9 (357 aa).

The segment at 1–39 (MKNKYYPLRSSMDEMSAKNDNEIDLEKGPLPEYNSEDGS) is disordered. Residues 11–29 (SMDEMSAKNDNEIDLEKGP) are compositionally biased toward basic and acidic residues. 7 helical membrane passes run 89–109 (LLISVLAVIVVFFTAWVCVNP), 119–139 (AFFVTIGITCPILLITIFCFF), 149–169 (CIKVTVIFLAQCVKVTVISLA), 198–218 (VVIIWLLWVVICYTLFLRSKF), 232–252 (CSISAALLLFLLYVRLPFWTL), 256–276 (FSGLFQVLGVQSCVVIVTKGL), and 286–306 (ATGYEIEASSLFVIGNFLFFY).

The protein belongs to the WTF family. In terms of assembly, homomer. Forms protein aggregates. The two isoforms can interact with each other and with themselves. High sequence similarity is required for their interaction.

The protein localises to the spore membrane. Its subcellular location is the vacuole membrane. It is found in the ascus epiplasm. It localises to the cytoplasm. The protein resides in the endoplasmic reticulum membrane. Functionally, promotes unequal transmission of alleles from the parental zygote to progeny spores by acting as poison/antidote system where the poison and antidote proteins are produced from the same locus; the poison component is trans-acting and targets all spores within an ascus whereas the antidote component is spore-specific, leading to poisoning of all progeny that do not inherit the allele. Localizes isoform 2 to the vacuole thereby facilitating its degradation. In terms of biological role, forms toxic aggregates that disrupt spore maturation. This chain is Meiotic driver wtf9, found in Schizosaccharomyces kambucha (Fission yeast).